A 259-amino-acid chain; its full sequence is MVPLMELDELCLLDMLVYLEGFMAFVSIVGLRSVGSPYGRYSPQWPGIRVPARPAWFIQELPSMAWPLYEYIRPAAARLGNLPNRVLLAMFLIHYVQRTLVFPVLIRGGKPTLLVTFVLAFLFCTFNGYVQSRYLSQFAVYAEDWVTHPCFLTGFALWLVGMVINIHSDHILRNLRKPGETGYKIPRGGLFEYVSAANYFGELVEWCGFALASWSLQGVVFALFTLSTLLTRAKQHHQWYHEKFEDYPKSRKILIPFVL.

The next 5 helical transmembrane spans lie at 10–30, 86–106, 111–131, 146–166, and 206–226; these read LCLL…SIVG, VLLA…PVLI, PTLL…GYVQ, VTHP…VINI, and WCGF…LFTL.

The protein belongs to the steroid 5-alpha reductase family. Liver and prostate (at a low level).

The protein localises to the microsome membrane. It is found in the endoplasmic reticulum membrane. The catalysed reaction is a 3-oxo-5alpha-steroid + NADP(+) = a 3-oxo-Delta(4)-steroid + NADPH + H(+). It catalyses the reaction 5alpha-pregnane-3,20-dione + NADP(+) = progesterone + NADPH + H(+). The enzyme catalyses 17beta-hydroxy-5alpha-androstan-3-one + NADP(+) = testosterone + NADPH + H(+). It carries out the reaction androst-4-ene-3,17-dione + NADPH + H(+) = 5alpha-androstan-3,17-dione + NADP(+). Functionally, converts testosterone into 5-alpha-dihydrotestosterone and progesterone or corticosterone into their corresponding 5-alpha-3-oxosteroids. It plays a central role in sexual differentiation and androgen physiology. In Rattus norvegicus (Rat), this protein is 3-oxo-5-alpha-steroid 4-dehydrogenase 1.